Reading from the N-terminus, the 161-residue chain is 3-hydroxyacyl-[acyl-carrier-protein] dehydratase FabZ (161 aa).

Residue His55 is part of the active site.

The protein belongs to the thioester dehydratase family. FabZ subfamily.

Its subcellular location is the cytoplasm. It catalyses the reaction a (3R)-hydroxyacyl-[ACP] = a (2E)-enoyl-[ACP] + H2O. Its function is as follows. Involved in unsaturated fatty acids biosynthesis. Catalyzes the dehydration of short chain beta-hydroxyacyl-ACPs and long chain saturated and unsaturated beta-hydroxyacyl-ACPs. This chain is 3-hydroxyacyl-[acyl-carrier-protein] dehydratase FabZ, found in Jannaschia sp. (strain CCS1).